A 197-amino-acid polypeptide reads, in one-letter code: MLATKVCFVTVGATASFEELVRAALDPSFVTALEENGYSHLLVQYGKNAVIYENFLKQYPPERRPWRRINISGFSFHEHGLGGDFALAQADISKGRSGGLVISHAGSGTILEVLRMGIPLIVVPNPSLQDNHQEELARQLQKQGYVVASHYQNLCQALHQAEQLRARMLRWPPVRGPDQKNQPTLEQVMSDEMGFVD.

A disordered region spans residues 174-197; the sequence is VRGPDQKNQPTLEQVMSDEMGFVD.

The protein belongs to the glycosyltransferase 28 family. In terms of assembly, heterodimer with alg14 to form a functional enzyme.

It localises to the endoplasmic reticulum. It carries out the reaction an N-acetyl-alpha-D-glucosaminyl-diphospho-di-trans,poly-cis-dolichol + UDP-N-acetyl-alpha-D-glucosamine = an N,N'-diacetylchitobiosyl-diphospho-di-trans,poly-cis-dolichol + UDP + H(+). Its function is as follows. Involved in protein N-glycosylation. Essential for the second step of the dolichol-linked oligosaccharide pathway. This is UDP-N-acetylglucosamine transferase subunit alg13 (alg13) from Aspergillus fumigatus (strain ATCC MYA-4609 / CBS 101355 / FGSC A1100 / Af293) (Neosartorya fumigata).